Consider the following 95-residue polypeptide: Small ribosomal subunit protein bS20c (95 aa).

It belongs to the bacterial ribosomal protein bS20 family.

The protein localises to the plastid. Its subcellular location is the chloroplast. In terms of biological role, binds directly to 16S ribosomal RNA. The protein is Small ribosomal subunit protein bS20c of Pyropia yezoensis (Susabi-nori).